The primary structure comprises 128 residues: S-protein homolog 5 (128 aa).

An N-terminal signal peptide occupies residues 1–20; sequence MEKVSIVCFFFFLLFGSGYG.

It belongs to the plant self-incompatibility (S1) protein family.

It localises to the secreted. This is S-protein homolog 5 from Arabidopsis thaliana (Mouse-ear cress).